We begin with the raw amino-acid sequence, 274 residues long: 2,3,4,5-tetrahydropyridine-2,6-dicarboxylate N-succinyltransferase (274 aa).

It belongs to the transferase hexapeptide repeat family.

It localises to the cytoplasm. It catalyses the reaction (S)-2,3,4,5-tetrahydrodipicolinate + succinyl-CoA + H2O = (S)-2-succinylamino-6-oxoheptanedioate + CoA. It functions in the pathway amino-acid biosynthesis; L-lysine biosynthesis via DAP pathway; LL-2,6-diaminopimelate from (S)-tetrahydrodipicolinate (succinylase route): step 1/3. The polypeptide is 2,3,4,5-tetrahydropyridine-2,6-dicarboxylate N-succinyltransferase (Escherichia fergusonii (strain ATCC 35469 / DSM 13698 / CCUG 18766 / IAM 14443 / JCM 21226 / LMG 7866 / NBRC 102419 / NCTC 12128 / CDC 0568-73)).